We begin with the raw amino-acid sequence, 142 residues long: Mediator of RNA polymerase II transcription subunit 21 (142 aa).

Residues 87 to 131 are a coiled coil; it reads AEEQLSRIDSLQKKLIQVEGEKIEAIKRKESLTKDIEELINEFTE.

It belongs to the Mediator complex subunit 21 family. As to quaternary structure, component of the Mediator complex.

It is found in the nucleus. Its function is as follows. Component of the Mediator complex, a coactivator involved in the regulated transcription of nearly all RNA polymerase II-dependent genes. Mediator functions as a bridge to convey information from gene-specific regulatory proteins to the basal RNA polymerase II transcription machinery. Mediator is recruited to promoters by direct interactions with regulatory proteins and serves as a scaffold for the assembly of a functional preinitiation complex with RNA polymerase II and the general transcription factors. The chain is Mediator of RNA polymerase II transcription subunit 21 (SRB7) from Eremothecium gossypii (strain ATCC 10895 / CBS 109.51 / FGSC 9923 / NRRL Y-1056) (Yeast).